The primary structure comprises 282 residues: MSVIGSKSCIFSVARYTRENEKSSCFTSINKKSSLDLRFPRNLAGVSCKFSGENPGTNGVSLSSKNKMEDYNTAMKRLMRSPYEYHHDLGMNYTLIRDELIVGSQPQKPEDIDHLKQEQNVAYILNLQQDKDIEYWGIDLDSIVRRCKELGIRHMRRPAKDFDPLSLRSQLPKAVSSLEWAVSEGKGRVYVHCSAGLGRAPGVSIAYMYWFCDMNLNTAYDTLVSKRPCGPNKGAIRGATYDLAKNDPWKEPFESLPENAFEDIADWERKLIQERVRALRGT.

A chloroplast-targeting transit peptide spans 1–61 (MSVIGSKSCI…GENPGTNGVS (61 aa)). Substrate is bound by residues Tyr83, 153–156 (RHMR), Asp161, and 177–180 (SLEW). The Tyrosine-protein phosphatase domain occupies 92–249 (NYTLIRDELI…TYDLAKNDPW (158 aa)). Cys193 serves as the catalytic Phosphocysteine intermediate. The short motif at 193–199 (CSAGLGR) is the Glucan phosphatase signature motif CXAGXGR element. Substrate-binding positions include 194–199 (SAGLGR), Gly230, Lys245, Glu251, 259–263 (NAFED), and Glu268.

Widely expressed.

Its subcellular location is the plastid. The protein localises to the chloroplast. Its function is as follows. Starch-associated phosphoglucan phosphatase that selectively dephosphorylates the glucan C3 position. Probably participates in the regulation of starch degradation. The polypeptide is Phosphoglucan phosphatase LSF2, chloroplastic (LSF2) (Arabidopsis thaliana (Mouse-ear cress)).